Here is a 247-residue protein sequence, read N- to C-terminus: 1-(5-phosphoribosyl)-5-[(5-phosphoribosylamino)methylideneamino] imidazole-4-carboxamide isomerase (247 aa).

Asp8 acts as the Proton acceptor in catalysis. Asp131 acts as the Proton donor in catalysis.

Belongs to the HisA/HisF family.

The protein resides in the cytoplasm. The catalysed reaction is 1-(5-phospho-beta-D-ribosyl)-5-[(5-phospho-beta-D-ribosylamino)methylideneamino]imidazole-4-carboxamide = 5-[(5-phospho-1-deoxy-D-ribulos-1-ylimino)methylamino]-1-(5-phospho-beta-D-ribosyl)imidazole-4-carboxamide. It functions in the pathway amino-acid biosynthesis; L-histidine biosynthesis; L-histidine from 5-phospho-alpha-D-ribose 1-diphosphate: step 4/9. This Ralstonia pickettii (strain 12J) protein is 1-(5-phosphoribosyl)-5-[(5-phosphoribosylamino)methylideneamino] imidazole-4-carboxamide isomerase.